Consider the following 434-residue polypeptide: UDP-N-acetylglucosamine 1-carboxyvinyltransferase (434 aa).

22–23 (KN) contacts phosphoenolpyruvate. Residue Arg97 participates in UDP-N-acetyl-alpha-D-glucosamine binding. Residue Asp121 is the Proton donor of the active site. Residues Asp319 and Met341 each contribute to the UDP-N-acetyl-alpha-D-glucosamine site.

It belongs to the EPSP synthase family. MurA subfamily.

Its subcellular location is the cytoplasm. The catalysed reaction is phosphoenolpyruvate + UDP-N-acetyl-alpha-D-glucosamine = UDP-N-acetyl-3-O-(1-carboxyvinyl)-alpha-D-glucosamine + phosphate. It participates in cell wall biogenesis; peptidoglycan biosynthesis. Cell wall formation. Adds enolpyruvyl to UDP-N-acetylglucosamine. The sequence is that of UDP-N-acetylglucosamine 1-carboxyvinyltransferase from Bacteroides thetaiotaomicron (strain ATCC 29148 / DSM 2079 / JCM 5827 / CCUG 10774 / NCTC 10582 / VPI-5482 / E50).